A 1274-amino-acid polypeptide reads, in one-letter code: DENN domain-containing protein 5B (1274 aa).

At Ser-2 the chain carries N-acetylserine. The uDENN domain maps to 39–244 (DELAGENFDQ…EVPLPPPGRS (206 aa)). Ser-49 and Ser-178 each carry phosphoserine. The 137-residue stretch at 263-399 (ELPLSDYPLR…VDFIQELSEV (137 aa)) folds into the cDENN domain. The region spanning 401-581 (LQFGIPPEGS…DNKIMSQWEE (181 aa)) is the dDENN domain. Positions 772-932 (LEENTLIASL…DYFCFTSVFT (161 aa)) constitute an RUN 1 domain. Residue Ser-822 is modified to Phosphoserine. Residues 916–936 (LLSLNAVDYFCFTSVFTTIMI) form a helical membrane-spanning segment. The 109-residue stretch at 936-1044 (IPYRSVIIPI…DDGSLERILI (109 aa)) folds into the PLAT domain. Thr-1062 bears the Phosphothreonine mark. Residues Ser-1068, Ser-1076, and Ser-1079 each carry the phosphoserine modification. Residues 1118 to 1267 (TVLLCGENGL…QDFTIVLEGS (150 aa)) form the RUN 2 domain.

This sequence belongs to the RAB6IP1 family.

It localises to the membrane. Functionally, guanine nucleotide exchange factor (GEF) which may activate RAB39A and/or RAB39B. Promotes the exchange of GDP to GTP, converting inactive GDP-bound Rab proteins into their active GTP-bound form. This chain is DENN domain-containing protein 5B (Dennd5b), found in Mus musculus (Mouse).